Reading from the N-terminus, the 211-residue chain is Large ribosomal subunit protein bL9 (211 aa).

The segment at 180–211 is disordered; it reads DDIGAAGMDDDDDDAPAPAQADPSSEESSEED.

It belongs to the bacterial ribosomal protein bL9 family.

In terms of biological role, binds to the 23S rRNA. In Jannaschia sp. (strain CCS1), this protein is Large ribosomal subunit protein bL9.